The primary structure comprises 184 residues: Photosystem I assembly protein Ycf4 (184 aa).

2 consecutive transmembrane segments (helical) span residues 21-43 (NFCWAFILFLGSLGFLLVGISSY) and 58-80 (LFFPQGIVMSFYGIAGLFISSYL).

Belongs to the Ycf4 family.

The protein localises to the plastid. It localises to the chloroplast thylakoid membrane. Functionally, seems to be required for the assembly of the photosystem I complex. This is Photosystem I assembly protein Ycf4 from Carpobrotus chilensis (Sea fig).